The sequence spans 420 residues: ATP phosphoribosyltransferase regulatory subunit (420 aa).

It belongs to the class-II aminoacyl-tRNA synthetase family. HisZ subfamily. As to quaternary structure, heteromultimer composed of HisG and HisZ subunits.

It localises to the cytoplasm. The protein operates within amino-acid biosynthesis; L-histidine biosynthesis; L-histidine from 5-phospho-alpha-D-ribose 1-diphosphate: step 1/9. In terms of biological role, required for the first step of histidine biosynthesis. May allow the feedback regulation of ATP phosphoribosyltransferase activity by histidine. The sequence is that of ATP phosphoribosyltransferase regulatory subunit from Synechococcus sp. (strain ATCC 27144 / PCC 6301 / SAUG 1402/1) (Anacystis nidulans).